We begin with the raw amino-acid sequence, 166 residues long: MAQRLLLGRFLTSVISRKPPQGVWASLTSKTLQTPQYNAGGLTVMPSPARTVHTTRVCLTTFNVQDGPDFQDRVVNSETPVVVDFHAQWCGPCKILGPRLEKMVAKQHGKVVMAKVDIDDHTDLAIEYEVSAVPTVLAIKNGDVVDKFVGIKDEDQLEAFLKKLIG.

The transit peptide at 1–59 (MAQRLLLGRFLTSVISRKPPQGVWASLTSKTLQTPQYNAGGLTVMPSPARTVHTTRVCL) directs the protein to the mitochondrion. Residues 61-166 (TFNVQDGPDF…LEAFLKKLIG (106 aa)) enclose the Thioredoxin domain. Residues Cys-90 and Cys-93 each act as nucleophile in the active site. Cys-90 and Cys-93 are joined by a disulfide. Position 152 is an N6-acetyllysine; alternate (Lys-152). N6-succinyllysine; alternate is present on Lys-152.

It belongs to the thioredoxin family. In terms of assembly, monomer.

It localises to the mitochondrion. In terms of biological role, important for the control of mitochondrial reactive oxygen species homeostasis, apoptosis regulation and cell viability. Is involved in various redox reactions including the reduction of protein disulfide bonds, through the reversible oxidation of its active center dithiol to a disulfide. The polypeptide is Thioredoxin, mitochondrial (Txn2) (Mus musculus (Mouse)).